A 117-amino-acid chain; its full sequence is Photosystem II reaction center Psb28 protein (117 aa).

Belongs to the Psb28 family. As to quaternary structure, part of the photosystem II complex.

The protein resides in the cellular thylakoid membrane. This chain is Photosystem II reaction center Psb28 protein, found in Prochlorococcus marinus (strain MIT 9515).